The sequence spans 633 residues: DNA-directed RNA polymerase subunit gamma (633 aa).

Cys-74, Cys-76, Cys-89, and Cys-92 together coordinate Zn(2+). Residues Asp-471, Asp-473, and Asp-475 each contribute to the Mg(2+) site.

The protein belongs to the RNA polymerase beta' chain family. RpoC1 subfamily. As to quaternary structure, in cyanobacteria the RNAP catalytic core is composed of 2 alpha, 1 beta, 1 beta', 1 gamma and 1 omega subunit. When a sigma factor is associated with the core the holoenzyme is formed, which can initiate transcription. Mg(2+) serves as cofactor. It depends on Zn(2+) as a cofactor.

It catalyses the reaction RNA(n) + a ribonucleoside 5'-triphosphate = RNA(n+1) + diphosphate. In terms of biological role, DNA-dependent RNA polymerase catalyzes the transcription of DNA into RNA using the four ribonucleoside triphosphates as substrates. This chain is DNA-directed RNA polymerase subunit gamma, found in Prochlorococcus marinus (strain MIT 9211).